Here is a 620-residue protein sequence, read N- to C-terminus: 1-deoxy-D-xylulose-5-phosphate synthase (620 aa).

Thiamine diphosphate is bound by residues His80 and 121 to 123 (GHS). A Mg(2+)-binding site is contributed by Asp152. Residues 153-154 (GA), Asn181, Tyr288, and Glu370 each bind thiamine diphosphate. Asn181 lines the Mg(2+) pocket.

The protein belongs to the transketolase family. DXPS subfamily. Homodimer. It depends on Mg(2+) as a cofactor. Requires thiamine diphosphate as cofactor.

It catalyses the reaction D-glyceraldehyde 3-phosphate + pyruvate + H(+) = 1-deoxy-D-xylulose 5-phosphate + CO2. It functions in the pathway metabolic intermediate biosynthesis; 1-deoxy-D-xylulose 5-phosphate biosynthesis; 1-deoxy-D-xylulose 5-phosphate from D-glyceraldehyde 3-phosphate and pyruvate: step 1/1. In terms of biological role, catalyzes the acyloin condensation reaction between C atoms 2 and 3 of pyruvate and glyceraldehyde 3-phosphate to yield 1-deoxy-D-xylulose-5-phosphate (DXP). This chain is 1-deoxy-D-xylulose-5-phosphate synthase, found in Klebsiella pneumoniae (strain 342).